A 183-amino-acid chain; its full sequence is Large ribosomal subunit protein uL6 (183 aa).

The protein belongs to the universal ribosomal protein uL6 family. As to quaternary structure, part of the 50S ribosomal subunit.

Its function is as follows. This protein binds to the 23S rRNA, and is important in its secondary structure. It is located near the subunit interface in the base of the L7/L12 stalk, and near the tRNA binding site of the peptidyltransferase center. This chain is Large ribosomal subunit protein uL6, found in Parabacteroides distasonis (strain ATCC 8503 / DSM 20701 / CIP 104284 / JCM 5825 / NCTC 11152).